We begin with the raw amino-acid sequence, 389 residues long: Acetyl-CoA:oxalate CoA-transferase (389 aa).

H237 is an active-site residue.

Homodimer.

It carries out the reaction oxalate + acetyl-CoA = oxalyl-CoA + acetate. Functionally, involved in the catabolism of oxalate and in the adapatation to low pH. ACOCT serves to prime the oxalate-induced acid tolerance response (ATR) cycle by producing substrate for oxalyl-CoA decarboxylase (OXC) and formyl-coenzyme A transferase (FCOCT). Catalyzes the reversible conversion of acetyl-CoA and oxalate to oxalyl-CoA and acetate. It can also use formyl-CoA and oxalate to produce oxalyl-CoA and formate with significantly reduced specific activity. This chain is Acetyl-CoA:oxalate CoA-transferase (uctC), found in Acetobacter aceti.